We begin with the raw amino-acid sequence, 196 residues long: Putative NADH dehydrogenase/NAD(P)H nitroreductase xcc-b100_0585 (196 aa).

It belongs to the nitroreductase family. HadB/RutE subfamily. The cofactor is FMN.

The sequence is that of Putative NADH dehydrogenase/NAD(P)H nitroreductase xcc-b100_0585 from Xanthomonas campestris pv. campestris (strain B100).